A 188-amino-acid polypeptide reads, in one-letter code: Elongation factor P (188 aa).

It belongs to the elongation factor P family.

The protein localises to the cytoplasm. Its pathway is protein biosynthesis; polypeptide chain elongation. Its function is as follows. Involved in peptide bond synthesis. Stimulates efficient translation and peptide-bond synthesis on native or reconstituted 70S ribosomes in vitro. Probably functions indirectly by altering the affinity of the ribosome for aminoacyl-tRNA, thus increasing their reactivity as acceptors for peptidyl transferase. The chain is Elongation factor P from Streptomyces avermitilis (strain ATCC 31267 / DSM 46492 / JCM 5070 / NBRC 14893 / NCIMB 12804 / NRRL 8165 / MA-4680).